The chain runs to 344 residues: G-protein coupled receptor str-217 (344 aa).

Topologically, residues 1-10 are extracellular; sequence MLLFQKTLSR. Residues 11–31 traverse the membrane as a helical segment; sequence VAAPISVAANLILILLIIFKS. Residues 32–39 lie on the Cytoplasmic side of the membrane; that stretch reads PAQMGNYK. A helical membrane pass occupies residues 40–60; the sequence is YLLIGLSIFEMSYAVLDVVSE. At 61–88 the chain is on the extracellular side; it reads TTVLSIKKSFVVVVPYKDRSFGQETAMD. The helical transmembrane segment at 89–109 threads the bilayer; that stretch reads INLIYCGFFGFSMGMFVVIFA. The Cytoplasmic portion of the chain corresponds to 110–128; sequence YRSFLTTGNTILRKFEGFK. A helical membrane pass occupies residues 129–149; sequence IISWFAYPLFYAIVWILVAWG. Over 150–195 the chain is Extracellular; that stretch reads PLASFPEMDIVVRPFLLDELNMTVDEVAYTGRLFYSTIDNSLRYSA. Asn170 is a glycosylation site (N-linked (GlcNAc...) asparagine). The chain crosses the membrane as a helical span at residues 196 to 216; the sequence is ILTGVLQWVLTASSLFLVIFF. Residues 217–256 lie on the Cytoplasmic side of the membrane; the sequence is GLRCYFHYGKLVQLTDVQSIRLRQLQNQLFLALVCQATVP. A helical membrane pass occupies residues 257–277; the sequence is LILMHIPVTILYTCCVLNIVF. Topologically, residues 278-279 are extracellular; the sequence is NP. Residues 280–300 traverse the membrane as a helical segment; the sequence is FSVATTIALFPAIDPLPTIFI. The Cytoplasmic segment spans residues 301–344; it reads VKNYRVALFEFVCPSCLCWSETLKHMGSNRITSYRSNTVNALSM.

Belongs to the nematode receptor-like protein str family. Expressed in the ADL chemosensory neurons.

It localises to the cell membrane. Its function is as follows. Probable G-protein coupled receptor. This chain is G-protein coupled receptor str-217, found in Caenorhabditis elegans.